The primary structure comprises 940 residues: Isoleucine--tRNA ligase (940 aa).

A 'HIGH' region motif is present at residues 58 to 68; the sequence is PYANGSIHIGH. E564 provides a ligand contact to L-isoleucyl-5'-AMP. The 'KMSKS' region motif lies at 605 to 609; that stretch reads KMSKS. K608 provides a ligand contact to ATP. The Zn(2+) site is built by C903, C906, C923, and C926.

It belongs to the class-I aminoacyl-tRNA synthetase family. IleS type 1 subfamily. In terms of assembly, monomer. Zn(2+) is required as a cofactor.

The protein resides in the cytoplasm. The catalysed reaction is tRNA(Ile) + L-isoleucine + ATP = L-isoleucyl-tRNA(Ile) + AMP + diphosphate. Catalyzes the attachment of isoleucine to tRNA(Ile). As IleRS can inadvertently accommodate and process structurally similar amino acids such as valine, to avoid such errors it has two additional distinct tRNA(Ile)-dependent editing activities. One activity is designated as 'pretransfer' editing and involves the hydrolysis of activated Val-AMP. The other activity is designated 'posttransfer' editing and involves deacylation of mischarged Val-tRNA(Ile). This is Isoleucine--tRNA ligase from Shewanella baltica (strain OS195).